We begin with the raw amino-acid sequence, 94 residues long: uncharacterized protein (94 aa).

Positions 1–25 are cleaved as a signal peptide; that stretch reads MRAAIAVLFIALVGLATYHLVMSQA.

This is an uncharacterized protein from Archaeoglobus fulgidus (strain ATCC 49558 / DSM 4304 / JCM 9628 / NBRC 100126 / VC-16).